The primary structure comprises 3414 residues: Genome polyprotein (3414 aa).

Positions 1 to 27 are disordered; sequence MAGKAVLKGKGGGPPRRASKVAPKKTR. The Cytoplasmic segment spans residues 1–98; that stretch reads MAGKAVLKGK…LHRRGSRRTT (98 aa). The span at 17-27 shows a compositional bias: basic residues; that stretch reads RASKVAPKKTR. Residues 97–117 constitute a propeptide, ER anchor for the capsid protein C, removed in mature form by serine protease NS3; it reads TTIDWMTPLLITVMLGMCLTA. The helical transmembrane segment at 99-117 threads the bilayer; sequence IDWMTPLLITVMLGMCLTA. The Extracellular portion of the chain corresponds to 118 to 242; it reads TVRRERDGSM…HLTRVEGWVW (125 aa). N-linked (GlcNAc...) asparagine; by host glycosylation is present at asparagine 144. The helical transmembrane segment at 243 to 260 threads the bilayer; that stretch reads KNKLFTLSLVMVAWLMVD. Glycine 261 is a topological domain (cytoplasmic). The chain crosses the membrane as a helical span at residues 262–280; it reads LLPRILIVVVALALVPAYA. Residues 281–727 are Extracellular-facing; it reads SRCTHLENRD…HTVLGGAFNT (447 aa). Disulfide bonds link cysteine 283-cysteine 310, cysteine 340-cysteine 396, cysteine 340-cysteine 401, cysteine 354-cysteine 385, cysteine 372-cysteine 396, and cysteine 372-cysteine 401. Residues 378-391 are fusion peptide; it reads DRGWGNHCGLFGKG. N-linked (GlcNAc...) asparagine; by host glycosylation is present at asparagine 434. Cystine bridges form between cysteine 466–cysteine 570 and cysteine 587–cysteine 618. The chain crosses the membrane as a helical span at residues 728–748; it reads LLGGVGFLPKILLGVAMAWLG. At 749-755 the chain is on the cytoplasmic side; sequence LNMRNPT. A helical membrane pass occupies residues 756-776; it reads LSMGFLLSGGLVLAMTLGVGA. Residues 777-1187 are Extracellular-facing; the sequence is DVGCAVDTER…LVSVESLFRY (411 aa). Disulfide bonds link cysteine 780–cysteine 791, cysteine 831–cysteine 920, cysteine 955–cysteine 1000, cysteine 1057–cysteine 1106, cysteine 1068–cysteine 1090, and cysteine 1089–cysteine 1093. N-linked (GlcNAc...) asparagine; by host glycans are attached at residues asparagine 861, asparagine 983, and asparagine 999. Residues 1188–1208 traverse the membrane as a helical segment; sequence LVAVGLVFQLELGPEAVAMVL. At 1209 to 1232 the chain is on the cytoplasmic side; it reads LQAVFEMRTCLLSGFVLRRSITTR. The helical transmembrane segment at 1233–1253 threads the bilayer; it reads EIVTVYFLLLVLEMGIPVKGL. The Lumenal segment spans residues 1254-1267; that stretch reads EHLWRWTDALAMGA. Residues 1268-1288 traverse the membrane as a helical segment; it reads IIFRACTAEGKTGIGLLLAAF. At 1289–1300 the chain is on the cytoplasmic side; the sequence is MTQSDMNIIHDG. The chain crosses the membrane as a helical span at residues 1301–1319; it reads LTAFLCVATTMAIWRYIRG. The Lumenal portion of the chain corresponds to 1320-1325; it reads QGERKG. A helical membrane pass occupies residues 1326 to 1346; that stretch reads LTWIVPLAGILGGEGSGVRLL. Residues 1347 to 1359 lie on the Cytoplasmic side of the membrane; the sequence is AFWELAASRGRRS. The helical transmembrane segment at 1360 to 1378 threads the bilayer; the sequence is FNEPMTVIGVMLTLASGMM. At 1379-1382 the chain is on the lumenal side; it reads RHTS. The chain crosses the membrane as a helical span at residues 1383–1403; it reads QEAVCAMALAAFLLLMLTLGT. At 1404–1454 the chain is on the cytoplasmic side; that stretch reads RKMQLLAEWSGNIEWNPELTSEGGEVSLRVRQDALGNLHLTELEKEERMMA. Residues 1410–1449 form an interacts with and activates NS3 protease region; the sequence is AEWSGNIEWNPELTSEGGEVSLRVRQDALGNLHLTELEKE. The helical intramembrane region spans 1455–1475; that stretch reads FWLVVGLIASAFHWSGILIVM. At 1476 to 2160 the chain is on the cytoplasmic side; that stretch reads GLWTISEMLG…RIGERDAPEA (685 aa). Residues 1490–1669 enclose the Peptidase S7 domain; sequence TDLVFSGCSE…EVEKSRPNLP (180 aa). Active-site charge relay system; for serine protease NS3 activity residues include histidine 1543, aspartate 1567, and serine 1627. The Helicase ATP-binding domain occupies 1675-1831; sequence TGWTAKGQIT…ESNGAIASEE (157 aa). 1688–1695 is a binding site for ATP; that stretch reads MHPGSGKT. A DEAH box motif is present at residues 1779-1782; sequence DEAH. Residues 1841–2000 enclose the Helicase C-terminal domain; sequence DGFDWITEYE…TARGPVATFY (160 aa). N6-acetyllysine; by host is present on lysine 1883. Residues 2161 to 2181 traverse the membrane as a helical segment; sequence FLTAVEMLVLGLATLGVVWCF. The Lumenal segment spans residues 2182–2189; sequence VVRTSVSR. Positions 2190-2209 form an intramembrane region, helical; that stretch reads MVLGTLVLATSLIFLWAGGV. A topological domain (lumenal) is located at residue glycine 2210. A helical transmembrane segment spans residues 2211–2231; that stretch reads YGNMAGVALVFYTLLTVLQPE. The Cytoplasmic segment spans residues 2232 to 2238; it reads TGKQRSS. Residues 2239 to 2259 form a helical membrane-spanning segment; that stretch reads DDNKLAYFLLTLCGLAGMVAA. The Lumenal segment spans residues 2260 to 2296; it reads NEMGLLEKTKADLAALFARDQGETVRWGEWTNLDIQP. The segment at residues 2297-2315 is an intramembrane region (helical); the sequence is ARSWGTYVLVVSLFTPYML. Residues 2316-2343 are Lumenal-facing; that stretch reads HQLQTRIQQLVNSAVASGAQAMRDLGGG. Positions 2344–2364 form an intramembrane region, helical; sequence TPFFGVAGHVLALGVASLVGA. Topologically, residues 2365–2368 are lumenal; sequence TPTS. A helical transmembrane segment spans residues 2369 to 2389; it reads LILGVGLAAFHLAIVVSGLEA. Over 2390–2432 the chain is Cytoplasmic; the sequence is ELTQRAHKVFFSAMVRNPMVDGDVINPFGDGEAKPALYERKLS. The helical transmembrane segment at 2433–2453 threads the bilayer; the sequence is LILALVLCLASVVMNRTFVAV. Residues 2454 to 2477 are Lumenal-facing; that stretch reads TEAGAVGVAAAMQLLRPEMDVLWT. Residues 2478–2498 form a helical membrane-spanning segment; that stretch reads MPVACGMSGVVRGSLWGLLPL. Residues 2499–3414 lie on the Cytoplasmic side of the membrane; the sequence is GHRLWLRTTG…WELKLESSIF (916 aa). Residues 2512 to 2776 form the mRNA cap 0-1 NS5-type MT domain; that stretch reads GGSEGDTLGD…EIDLGVGTRS (265 aa). Residue serine 2567 coordinates S-adenosyl-L-methionine. Residue serine 2567 is modified to Phosphoserine. Lysine 2572 serves as the catalytic For 2'-O-MTase activity. S-adenosyl-L-methionine is bound by residues glycine 2597, tryptophan 2598, threonine 2615, isoleucine 2616, aspartate 2642, and valine 2643. Aspartate 2657 (for 2'-O-MTase activity) is an active-site residue. Isoleucine 2658 provides a ligand contact to S-adenosyl-L-methionine. Active-site for 2'-O-MTase activity residues include lysine 2694 and glutamate 2730. The tract at residues 2730–2734 is interaction with host SCRIB; it reads EMYFS. An S-adenosyl-L-methionine-binding site is contributed by tyrosine 2732. The Zn(2+) site is built by glutamate 2950, histidine 2954, cysteine 2959, and cysteine 2962. Residues 3040–3189 enclose the RdRp catalytic domain; that stretch reads GLFYADDTAG…RPVDDRFSKA (150 aa). Positions 3224, 3240, and 3359 each coordinate Zn(2+).

It in the N-terminal section; belongs to the class I-like SAM-binding methyltransferase superfamily. mRNA cap 0-1 NS5-type methyltransferase family. In terms of assembly, homodimer. Interacts (via N-terminus) with host EXOC1 (via C-terminus); this interaction results in EXOC1 degradation through the proteasome degradation pathway. As to quaternary structure, forms heterodimers with envelope protein E in the endoplasmic reticulum and Golgi. Homodimer; in the endoplasmic reticulum and Golgi. Interacts with protein prM. Interacts with non-structural protein 1. In terms of assembly, homodimer; Homohexamer when secreted. Interacts with envelope protein E. As to quaternary structure, interacts (via N-terminus) with serine protease NS3. Forms a heterodimer with serine protease NS3. May form homooligomers. In terms of assembly, forms a heterodimer with NS2B. Interacts with non-structural protein 2A (via N-terminus). Interacts with NS4B. Interacts with unphosphorylated RNA-directed RNA polymerase NS5; this interaction stimulates RNA-directed RNA polymerase NS5 guanylyltransferase activity. As to quaternary structure, interacts with serine protease NS3. Interacts with NS1. Homodimer. Interacts with host STAT2; this interaction inhibits the phosphorylation of the latter, and, when all viral proteins are present (polyprotein), targets STAT2 for degradation. Interacts with serine protease NS3. Interacts with host SCRIB; this interaction targets NS5 to the cell membrane periphery and nucleus, thereby allowing efficient host nuclear STAT1 inhibition. Post-translationally, specific enzymatic cleavages in vivo yield mature proteins. Cleavages in the lumen of endoplasmic reticulum are performed by host signal peptidase, whereas cleavages in the cytoplasmic side are performed by serine protease NS3. Signal cleavage at the 2K-4B site requires a prior NS3 protease-mediated cleavage at the 4A-2K site. In terms of processing, cleaved in post-Golgi vesicles by a host furin, releasing the mature small envelope protein M, and peptide pr. This cleavage is incomplete as up to 30% of viral particles still carry uncleaved prM. N-glycosylated. Post-translationally, N-glycosylated. The excreted form is glycosylated and this is required for efficient secretion of the protein from infected cells. In terms of processing, acetylated by host KAT5. Acetylation modulates NS3 RNA-binding and unwinding activities and plays an important positive role for viral replication. Phosphorylated on serines residues. This phosphorylation may trigger NS5 nuclear localization.

The protein resides in the virion. It localises to the host nucleus. The protein localises to the host cytoplasm. Its subcellular location is the host perinuclear region. It is found in the secreted. The protein resides in the virion membrane. It localises to the host endoplasmic reticulum membrane. It carries out the reaction Selective hydrolysis of -Xaa-Xaa-|-Yaa- bonds in which each of the Xaa can be either Arg or Lys and Yaa can be either Ser or Ala.. The enzyme catalyses RNA(n) + a ribonucleoside 5'-triphosphate = RNA(n+1) + diphosphate. It catalyses the reaction a ribonucleoside 5'-triphosphate + H2O = a ribonucleoside 5'-diphosphate + phosphate + H(+). The catalysed reaction is ATP + H2O = ADP + phosphate + H(+). It carries out the reaction a 5'-end (5'-triphosphoguanosine)-ribonucleoside in mRNA + S-adenosyl-L-methionine = a 5'-end (N(7)-methyl 5'-triphosphoguanosine)-ribonucleoside in mRNA + S-adenosyl-L-homocysteine. The enzyme catalyses a 5'-end (N(7)-methyl 5'-triphosphoguanosine)-ribonucleoside in mRNA + S-adenosyl-L-methionine = a 5'-end (N(7)-methyl 5'-triphosphoguanosine)-(2'-O-methyl-ribonucleoside) in mRNA + S-adenosyl-L-homocysteine + H(+). Functionally, plays a role in virus budding by binding to membrane and gathering the viral RNA into a nucleocapsid that forms the core of a mature virus particle. During virus entry, may induce genome penetration in host cytoplasm after hemifusion induced by surface proteins. Can migrate to the cell nucleus where it modulates host functions. Inhibits RNA silencing by interfering with host Dicer. In terms of biological role, prevents premature fusion activity of envelope proteins in trans-Golgi by binding to envelope protein E at pH6.0. After virion release in extracellular space gets dissociated from E dimers. Its function is as follows. Acts as a chaperone for envelope protein E during intracellular virion assembly by masking and inactivating envelope protein E fusion peptide. prM is the only viral peptide matured by host furin in the trans-Golgi network. Presumably to avoid catastrophic activation of the viral fusion activity in acidic GolGi compartment prior to virion release. prM-E cleavage is ineficient, and many virions are only partially matured. These uncleaved prM would play a role in immune evasion. Functionally, may play a role in virus budding. Exerts cytotoxic effects by activating a mitochondrial apoptotic pathway through M extodomain. May display a viroporin activity. Binds to host cell surface receptor and mediates fusion between viral and cellular membranes. Envelope protein is synthesized in the endoplasmic reticulum in the form of heterodimer with protein prM. They play a role in virion budding in the ER, and the newly formed immature particle is covered with 60 spikes composed of heterodimer between precursor prM and envelope protein E. The virion is transported to the Golgi apparatus where the low pH causes dissociation of PrM-E heterodimers and formation of E homodimers. prM-E cleavage is ineficient, and many virions are only partially matured. These uncleaved prM would play a role in immune evasion. In terms of biological role, involved in immune evasion, pathogenesis and viral replication. Once cleaved off the polyprotein, is targeted to three destinations: the viral replication cycle, the plasma membrane and the extracellular compartment. Essential for viral replication. Required for formation of the replication complex and recruitment of other non-structural proteins to the ER-derived membrane structures. Excreted as a hexameric lipoparticle that plays a role against host immune response. Antagonizing the complement function. Binds to the host macrophages and dendritic cells. Inhibits signal transduction originating from Toll-like receptor 3 (TLR3). Its function is as follows. Component of the viral RNA replication complex that functions in virion assembly and antagonizes the host immune response. Functionally, required cofactor for the serine protease function of NS3. May have membrane-destabilizing activity and form viroporins. Displays three enzymatic activities: serine protease, NTPase and RNA helicase. NS3 serine protease, in association with NS2B, performs its autocleavage and cleaves the polyprotein at dibasic sites in the cytoplasm: C-prM, NS2A-NS2B, NS2B-NS3, NS3-NS4A, NS4A-2K and NS4B-NS5. NS3 RNA helicase binds RNA and unwinds dsRNA in the 3' to 5' direction. In terms of biological role, regulates the ATPase activity of the NS3 helicase activity. NS4A allows NS3 helicase to conserve energy during unwinding. Its function is as follows. Functions as a signal peptide for NS4B and is required for the interferon antagonism activity of the latter. Functionally, induces the formation of ER-derived membrane vesicles where the viral replication takes place. Inhibits interferon (IFN)-induced host STAT1 phosphorylation and nuclear translocation, thereby preventing the establishment of cellular antiviral state by blocking the IFN-alpha/beta pathway. Inhibits STAT2 translocation in the nucleus after IFN-alpha treatment. Replicates the viral (+) and (-) genome, and performs the capping of genomes in the cytoplasm. NS5 methylates viral RNA cap at guanine N-7 and ribose 2'-O positions. Besides its role in genome replication, also prevents the establishment of cellular antiviral state by blocking the interferon-alpha/beta (IFN-alpha/beta) signaling pathway. Inhibits host TYK2 and STAT2 phosphorylation, thereby preventing activation of JAK-STAT signaling pathway. The polypeptide is Genome polyprotein (Homo sapiens (Human)).